A 155-amino-acid polypeptide reads, in one-letter code: MSAAVKPLQIKILDPRLGTVWPLPTYATEASAGLDLRAALDAPMTLVPGDAELLSTGIAIHLVDPSLCAVVLPRSGLGHRHGIVLGNGTGLIDSDYQGPLLVSVWNRGREAFTIEPGDRIAQLVVLPIVRVVLQVVDTFVESGRGAGGFGHTGVR.

Residues 74 to 76, N87, and 91 to 93 each bind substrate; these read RSG and LID.

It belongs to the dUTPase family. It depends on Mg(2+) as a cofactor.

The enzyme catalyses dUTP + H2O = dUMP + diphosphate + H(+). It participates in pyrimidine metabolism; dUMP biosynthesis; dUMP from dCTP (dUTP route): step 2/2. Functionally, this enzyme is involved in nucleotide metabolism: it produces dUMP, the immediate precursor of thymidine nucleotides and it decreases the intracellular concentration of dUTP so that uracil cannot be incorporated into DNA. This chain is Deoxyuridine 5'-triphosphate nucleotidohydrolase, found in Xylella fastidiosa (strain M23).